A 513-amino-acid polypeptide reads, in one-letter code: GMP synthase [glutamine-hydrolyzing] (513 aa).

The 190-residue stretch at 9–198 folds into the Glutamine amidotransferase type-1 domain; the sequence is LILVLDFGSQ…VRRVCNCTGE (190 aa). The Nucleophile role is filled by C86. Active-site residues include H172 and E174. The GMPS ATP-PPase domain maps to 199–388; that stretch reads WTMENFIEIE…LGIPEHLVWR (190 aa). Residue 226-232 coordinates ATP; it reads SGGVDSS.

Homodimer.

It catalyses the reaction XMP + L-glutamine + ATP + H2O = GMP + L-glutamate + AMP + diphosphate + 2 H(+). Its pathway is purine metabolism; GMP biosynthesis; GMP from XMP (L-Gln route): step 1/1. Its function is as follows. Catalyzes the synthesis of GMP from XMP. The chain is GMP synthase [glutamine-hydrolyzing] from Staphylococcus epidermidis (strain ATCC 12228 / FDA PCI 1200).